The following is a 45-amino-acid chain: Osteocalcin (45 aa).

The region spanning 1-44 (AGTAXGDLTPFQLESLREVCEVNLACEHMADTXGIVAAYTAYYG) is the Gla domain. Residues glutamate 14, glutamate 18, glutamate 21, and glutamate 27 each coordinate Ca(2+). A 4-carboxyglutamate mark is found at glutamate 14, glutamate 18, and glutamate 21. Cysteine 20 and cysteine 26 are oxidised to a cystine.

It belongs to the osteocalcin/matrix Gla protein family. Post-translationally, gamma-carboxyglutamate residues are formed by vitamin K dependent carboxylation by GGCX. These residues are essential for the binding of calcium.

It is found in the secreted. In terms of biological role, the carboxylated form is one of the main organic components of the bone matrix, which constitutes 1-2% of the total bone protein. The carboxylated form binds strongly to apatite and calcium. The protein is Osteocalcin (bglap) of Danio rerio (Zebrafish).